The sequence spans 367 residues: 7,8-didemethyl-8-hydroxy-5-deazariboflavin synthase (367 aa).

Positions 39-275 (LTFARNVFVP…AEVGVQVPPN (237 aa)) constitute a Radical SAM core domain. 3 residues coordinate [4Fe-4S] cluster: Cys53, Cys57, and Cys60.

Belongs to the radical SAM superfamily. CofG family. In terms of assembly, consists of two subunits, CofG and CofH. Requires [4Fe-4S] cluster as cofactor.

It carries out the reaction 5-amino-5-(4-hydroxybenzyl)-6-(D-ribitylimino)-5,6-dihydrouracil + S-adenosyl-L-methionine = 7,8-didemethyl-8-hydroxy-5-deazariboflavin + 5'-deoxyadenosine + L-methionine + NH4(+) + H(+). Its pathway is cofactor biosynthesis; coenzyme F0 biosynthesis. Catalyzes the radical-mediated synthesis of 7,8-didemethyl-8-hydroxy-5-deazariboflavin from 5-amino-5-(4-hydroxybenzyl)-6-(D-ribitylimino)-5,6-dihydrouracil. This is 7,8-didemethyl-8-hydroxy-5-deazariboflavin synthase from Halobacterium salinarum (strain ATCC 29341 / DSM 671 / R1).